The following is a 729-amino-acid chain: Alpha-galactosidase AgaA (729 aa).

Residues Asp53, Trp199, 366-367 (DD), Arg443, 476-480 (KWDMN), Cys526, and Asp548 contribute to the substrate site. The Nucleophile role is filled by Asp478. Asp548 serves as the catalytic Proton donor.

This sequence belongs to the glycosyl hydrolase 36 family. In terms of assembly, homotetramer.

The enzyme catalyses Hydrolysis of terminal, non-reducing alpha-D-galactose residues in alpha-D-galactosides, including galactose oligosaccharides, galactomannans and galactolipids.. Its activity is regulated as follows. Not inhibited by D-galactose or sucrose. Inhibited by pharmaceutical drug 1-deoxygalactonojirimycin. In terms of biological role, hydrolyzes the short-chain alpha-galactosaccharides raffinose and stachyose. The sequence is that of Alpha-galactosidase AgaA from Geobacillus stearothermophilus (Bacillus stearothermophilus).